Here is a 1625-residue protein sequence, read N- to C-terminus: Nonribosomal peptide synthetase aclP (1625 aa).

The Carrier 1 domain occupies 47–123 (TTMNPSSQLL…ALFTDLLSSE (77 aa)). Serine 84 is subject to O-(pantetheine 4'-phosphoryl)serine. Residues 127 to 157 (IPIPDPSDDSDDLSNPSSSTGGSPRVATPIS) form a disordered region. Residues 286-567 (ASSQSTVIWA…KYFQRALQLL (282 aa)) are condensation 1. The interval 614–997 (FESAVSRNPM…GRTDRQIKLR (384 aa)) is adenylation. The 76-residue stretch at 1096–1171 (SPMEKLVGDA…HLAAAIDSGL (76 aa)) folds into the Carrier 2 domain. O-(pantetheine 4'-phosphoryl)serine is present on serine 1131. A condensation 2 region spans residues 1195–1585 (EWWHKYQINE…LQARIPLALS (391 aa)).

It belongs to the NRP synthetase family.

It participates in mycotoxin biosynthesis. In terms of biological role, nonribosomal peptide synthetase; part of the gene cluster that mediates the biosynthesis of aspirochlorine (or antibiotic A30641), an unusual halogenated spiro compound with distinctive antifungal properties due to selective inhibition of protein biosynthesis, and which is also active against bacteria, viruses, and murine tumor cells. The non-ribosomal peptide synthetase (NRPS) aclP is responsible the formation of the diketopiperazine (DKP) core from the condensation of 2 phenylalanine residues. One Phe residue is tailored into chlorotyrosine by hydroxylation and chlorination, whereas the second Phe undergoes an unprecedented C-C bond cleavage to be converted into glycine. After formation of the DKP, sulfur is incorporated into the DKP by conjugation with glutathione by aclG, followed by its stepwise degradation to the thiol by aclI, aclJ and aclK, and the dithiol oxidation by aclT. In addition, oxygenases (aclB, aclC, aclL and aclO) and O-methyltransferases (aclM and aclU) act as tailoring enzymes to produce the intermediate dechloroaspirochlorine. Ultimately, chlorination of dechloroaspirochlorine by the halogenase aclH is the last step in the aspirochlorine pathway. This Aspergillus oryzae (strain ATCC 42149 / RIB 40) (Yellow koji mold) protein is Nonribosomal peptide synthetase aclP.